Here is a 681-residue protein sequence, read N- to C-terminus: Leucine-rich repeat, immunoglobulin-like domain and transmembrane domain-containing protein 3 (681 aa).

The first 19 residues, 1-19 (MWLSACLCLVLSFLGGVNG), serve as a signal peptide directing secretion. A glycan (N-linked (GlcNAc...) asparagine) is linked at Asn-18. At 20 to 584 (TCPSQCSCEY…RVEGRGSQWS (565 aa)) the chain is on the lumenal side. LRR repeat units follow at residues 56–79 (PVDTSKLRIEKTVVRRLPAEAFYY), 80–103 (LVELQYLWLAYNSVASIETSSFYN), 104–128 (LRQLHELRLDGNSLTAFPWVSLLDM), 129–151 (PHLRTLDLHNNRIASVPNEAVRY), and 152–175 (LRNLTCLDLSSNRLTTLPPDFLDS). The Ig-like domain maps to 254–344 (PSVMMSATKI…GISEAVVTVT (91 aa)). Cys-275 and Cys-328 are oxidised to a cystine. A glycan (N-linked (GlcNAc...) asparagine) is linked at Asn-296. Disordered regions lie at residues 350-391 (TTTL…GLTS) and 425-464 (TSVQTSISGRTARTSHQPPLLHPGGKSNAKIEKNGRKFPP). Over residues 378–391 (TPPSKSWLSPGLTS) the composition is skewed to polar residues. Asn-485 and Asn-506 each carry an N-linked (GlcNAc...) asparagine glycan. The helical transmembrane segment at 585–605 (LLLVVTSTACVIVVPLICFLL) threads the bilayer. The Cytoplasmic portion of the chain corresponds to 606–681 (YKVCKLQCTS…SDGCRTEYYG (76 aa)).

As to expression, detected in the outer plexiform layer (OPL) of the retina, where it localizes to rod and cone ON-bipolar cells (at protein level). Also detected in bipolar cell bodies in the inner retinal layer (INL) (at protein level).

It is found in the cell projection. The protein localises to the dendrite. The protein resides in the perikaryon. It localises to the endoplasmic reticulum membrane. Plays a role in the synapse formation and synaptic transmission between cone photoreceptor cells and retinal bipolar cells. Required for normal transmission of a light-evoked stimulus from the cone photoreceptor cells to the ON-bipolar cells and ON-ganglion cells in the inner retina. Required in retinal ON-bipolar cells for normal localization of the cation channel TRPM1 at dendrite tips. Seems to play a specific role in synaptic contacts made by ON-bipolar cells with cone photoreceptor pedicles. May also have a role in cone synapse formation. Might facilitate FGFR1 exit from the endoplasmic reticulum to the Golgi. Could be a regulator of the FGFRs. This chain is Leucine-rich repeat, immunoglobulin-like domain and transmembrane domain-containing protein 3, found in Mus musculus (Mouse).